A 665-amino-acid chain; its full sequence is Probable potassium transport system protein Kup (665 aa).

Residues 1 to 18 (MASEAPHASAPDCAPASS) show a composition bias toward low complexity. Residues 1–31 (MASEAPHASAPDCAPASSDIPQQDGGSTNGH) form a disordered region. Transmembrane regions (helical) follow at residues 40–60 (FFALALGSVGVVFGDIGTSPL), 83–103 (VVSLALWALILIVTIKYVVFI), 131–151 (LVFVLGVAGAALFYGDAVITP), 171–191 (GVTNEVVLLIATVMLLGLFFI), 202–222 (LFGPVCAVWFGVMFSLGLMNL), 245–265 (GLTGFIVLGAVFLTVTGVEAL), 281–301 (WLFFVLPCLAMNYLGQGAFAL), 332–352 (LVLLAGAATVIASQAVITGAF), 380–400 (IFVPQLNTMLLLGVLAIMFTF), 409–429 (AYGLAVTGTMIVTTCMAFIVM), 435–455 (WSMPMALLFLVPFLALDITFL), and 462–482 (FFSGGWLPVLIGAALFTIMAT).

This sequence belongs to the HAK/KUP transporter (TC 2.A.72) family.

The protein localises to the cell inner membrane. It carries out the reaction K(+)(in) + H(+)(in) = K(+)(out) + H(+)(out). Functionally, transport of potassium into the cell. Likely operates as a K(+):H(+) symporter. This chain is Probable potassium transport system protein Kup, found in Caulobacter vibrioides (strain ATCC 19089 / CIP 103742 / CB 15) (Caulobacter crescentus).